A 1017-amino-acid polypeptide reads, in one-letter code: Dopamine dehydroxylase (1017 aa).

The segment at residues 1–34 (MGNLTMSRRTFVKTAAITGAAAAAFGASTHTALA) is a signal peptide (tat-type signal). The 4Fe-4S Mo/W bis-MGD-type domain maps to 45-103 (DTVAVKTCCRGCGKMECGVKVIVQNGRAIRVEGDEGAFQSMGNCCTKSQSSIQAAYHPD). [4Fe-4S] cluster contacts are provided by Cys-53, Cys-56, Cys-61, and Cys-89. Lys-91 functions as the Electron donor/acceptor in the catalytic mechanism.

This sequence belongs to the prokaryotic molybdopterin-containing oxidoreductase family. [4Fe-4S] cluster is required as a cofactor. It depends on Mo-bis(molybdopterin guanine dinucleotide) as a cofactor. Predicted to be exported by the Tat system. The position of the signal peptide cleavage has not been experimentally proven.

The catalysed reaction is dopamine + AH2 = 3-tyramine + A + H2O. In terms of biological role, involved in drug metabolism, as part of an interspecies gut bacterial pathway for Levodopa (L-dopa) metabolism, acting on dopamine produced by Enterecoccus L-dopa decarboxylase. Removes the para hydroxyl group of dopamine to produce m-tyramine (3-tyramine). It is possible that dopamine dehydroxylation influences the multiple side effects of L-dopa administration linked to dopamine production in the treatment of Parkinson's disease. The chain is Dopamine dehydroxylase from Eggerthella lenta (Eubacterium lentum).